The primary structure comprises 608 residues: Protoheme IX farnesyltransferase (608 aa).

The COX15/CtaA stretch occupies residues 1–304 (MKTPAWSRLA…VFLATSALER (304 aa)). 17 helical membrane passes run 10 to 30 (AGYA…GAYV), 67 to 87 (ATSG…LRAF), 99 to 119 (LALF…LFGW), 139 to 159 (TYFL…GGPL), 167 to 187 (VGLA…SGAV), 220 to 240 (VLHP…GYLV), 252 to 272 (LAQG…INVA), 277 to 297 (VWMQ…FVFL), 338 to 357 (VISL…AKGW), 362 to 384 (VFLA…NMVV), 411 to 431 (LLFA…GANL), 432 to 452 (LAAT…TLYL), 460 to 480 (IVIG…AVTG), 488 to 508 (YLFA…ALMI), 530 to 550 (VIQI…PLLL), 555 to 575 (LLYL…SLAL), and 584 to 604 (AVSL…AMAV). Residues 339 to 606 (ISLLLFTALF…LLFAAMAVDR (268 aa)) are protoheme IX prenyltransferase.

The protein in the N-terminal section; belongs to the COX15/CtaA family. It in the C-terminal section; belongs to the UbiA prenyltransferase family. Protoheme IX farnesyltransferase subfamily.

It localises to the cell inner membrane. The catalysed reaction is heme b + (2E,6E)-farnesyl diphosphate + H2O = Fe(II)-heme o + diphosphate. It participates in porphyrin-containing compound metabolism; heme O biosynthesis; heme O from protoheme: step 1/1. Converts heme B (protoheme IX) to heme O by substitution of the vinyl group on carbon 2 of heme B porphyrin ring with a hydroxyethyl farnesyl side group. The chain is Protoheme IX farnesyltransferase (ctaB) from Thermus thermophilus (strain ATCC BAA-163 / DSM 7039 / HB27).